Reading from the N-terminus, the 251-residue chain is Cytochrome P450 monooxygenase ppzG (251 aa).

Cys-250 serves as a coordination point for heme.

This sequence belongs to the cytochrome P450 family. It depends on heme as a cofactor.

The protein operates within secondary metabolite biosynthesis. Its function is as follows. Cytochrome P450 monooxygenase; part of the gene cluster that mediates the biosynthesis of pyrrolopyrazines, secondary metabolites showing insecticidal activity. The role of ppzG within the pathway has still to be determined. The single multifunctional NRPS ppzA is sufficient to produce peramine via condensation of 1-pyrroline-5-carboxylate and arginine, N-methylation of the alpha-amino group of arginine and reduction of the thioester and the cyclization to form an iminium ion resulting in release from the peptide synthetase. Deprotonation of this intermediate and oxidation of the pyrroline ring would give rise to peramine. In Epichloe species that produce only peramine, the peramine synthetase gene is not localized in a gene cluster, in contrast to Metarhizium species that contain additional pyrrolopyrazine biosynthesis genes. The 2-oxoglutarate-Fe(II) type oxidoreductase ppzC hydroxylates peramine to yield the newly identified compound 8-hydroxyperamine whereas ppzD converts L-proline into trans-4-hydroxy-L-proline, a precursor of peramine biosynthesis. This Metarhizium rileyi (strain RCEF 4871) (Nomuraea rileyi) protein is Cytochrome P450 monooxygenase ppzG.